The chain runs to 231 residues: Ribonuclease 3 (231 aa).

An RNase III domain is found at 5–134 (QKKLKNDYGL…FLGALFIDQG (130 aa)). Residue glutamate 47 coordinates Mg(2+). Aspartate 51 is an active-site residue. Residues asparagine 120 and glutamate 123 each coordinate Mg(2+). Glutamate 123 is an active-site residue. One can recognise a DRBM domain in the interval 160–229 (DYKTELQEVL…AENAIKGQNH (70 aa)).

It belongs to the ribonuclease III family. Homodimer. Requires Mg(2+) as cofactor.

The protein localises to the cytoplasm. The catalysed reaction is Endonucleolytic cleavage to 5'-phosphomonoester.. Digests double-stranded RNA. Involved in the processing of primary rRNA transcript to yield the immediate precursors to the large and small rRNAs (23S and 16S). Processes some mRNAs, and tRNAs when they are encoded in the rRNA operon. Processes pre-crRNA and tracrRNA of type II CRISPR loci if present in the organism. This Lactococcus lactis subsp. cremoris (strain MG1363) protein is Ribonuclease 3.